Here is a 526-residue protein sequence, read N- to C-terminus: Fatty-acid amide hydrolase 2-B (526 aa).

A helical membrane pass occupies residues 12-32 (CLLVLVSGLFLALFRLLSPGT). Catalysis depends on charge relay system residues Lys128 and Ser203. Residue Ser227 is the Acyl-ester intermediate of the active site.

Belongs to the amidase family.

The protein localises to the membrane. It catalyses the reaction N-(5Z,8Z,11Z,14Z-eicosatetraenoyl)-ethanolamine + H2O = ethanolamine + (5Z,8Z,11Z,14Z)-eicosatetraenoate. It carries out the reaction (9Z)-octadecenamide + H2O = (9Z)-octadecenoate + NH4(+). The chain is Fatty-acid amide hydrolase 2-B (faah2b) from Danio rerio (Zebrafish).